We begin with the raw amino-acid sequence, 147 residues long: Plasminogen receptor (KT) (147 aa).

At 1 to 52 (MGFIFSKSMNENMKNQQEFMVMHARLQLERQLIMQNEMRERQMAMQIAWSRE) the chain is on the extracellular side. The chain crosses the membrane as a helical span at residues 53 to 73 (FLKYFGTFFGIATISLAAGAI). The Cytoplasmic segment spans residues 74 to 78 (KRKKP). A helical membrane pass occupies residues 79-99 (AFLIPIVPLSFIFTYQYDLGY). The Extracellular segment spans residues 100-147 (GTLLQRMKSEAEDILETEKTKLELPKGLITFESLEKARREQSKFFSDK).

In terms of assembly, interacts with PLAT. Interacts with PLAUR. In terms of tissue distribution, expressed in adrenal medulla (pheochromocytoma).

The protein resides in the cell membrane. In terms of biological role, receptor for plasminogen. Regulates urokinase plasminogen activator-dependent and stimulates tissue-type plasminogen activator-dependent cell surface plasminogen activation. Proposed to be part of a local catecholaminergic cell plasminogen activation system that regulates neuroendocrine prohormone processing. Involved in regulation of inflammatory response; regulates monocyte chemotactic migration and matrix metalloproteinase activation, such as of MMP2 and MMP9. The sequence is that of Plasminogen receptor (KT) (Plgrkt) from Rattus norvegicus (Rat).